Reading from the N-terminus, the 334-residue chain is 6-phosphogluconolactonase (334 aa).

Belongs to the cycloisomerase 2 family.

It catalyses the reaction 6-phospho-D-glucono-1,5-lactone + H2O = 6-phospho-D-gluconate + H(+). The protein operates within carbohydrate degradation; pentose phosphate pathway; D-ribulose 5-phosphate from D-glucose 6-phosphate (oxidative stage): step 2/3. Functionally, catalyzes the hydrolysis of 6-phosphogluconolactone to 6-phosphogluconate. The protein is 6-phosphogluconolactonase of Buchnera aphidicola subsp. Acyrthosiphon pisum (strain 5A).